Consider the following 177-residue polypeptide: MCLSHLENMPLSHSRTQGAQRSSWKLWLFCSIVMLLFLCSFSWLIFIFLQLETAKEPCMAKFGPLPSKWQMASSEPPCVNKVSDWKLEILQNGLYLIYGQVAPNANYNDVAPFEVRLYKNKDMIQTLTNKSKIQNVGGTYELHVGDTIDLIFNSEHQVLKNNTYWGIILLANPQFIS.

The Cytoplasmic segment spans residues 1–27 (MCLSHLENMPLSHSRTQGAQRSSWKLW). The chain crosses the membrane as a helical; Signal-anchor for type II membrane protein span at residues 28 to 48 (LFCSIVMLLFLCSFSWLIFIF). In terms of domain architecture, THD spans 47–170 (IFLQLETAKE…NNTYWGIILL (124 aa)). The Extracellular segment spans residues 49-177 (LQLETAKEPC…ILLANPQFIS (129 aa)). Cys-58 and Cys-78 form a disulfide bridge. Residues Asn-129 and Asn-161 are each glycosylated (N-linked (GlcNAc...) asparagine).

This sequence belongs to the tumor necrosis factor family. As to quaternary structure, homodimer. Homotrimer. In terms of tissue distribution, expressed at high levels in the small intestine, ovary, testis, kidney and endothelial cells.

It is found in the cell membrane. Functionally, cytokine that binds to TNFRSF18/AITR/GITR. Regulates T-cell responses. Can function as costimulator and lower the threshold for T-cell activation and T-cell proliferation. Important for interactions between activated T-lymphocytes and endothelial cells. Mediates activation of NF-kappa-B. Triggers increased phosphorylation of STAT1 and up-regulates expression of VCAM1 and ICAM1. Promotes leukocyte adhesion to endothelial cells. Regulates migration of monocytes from the splenic reservoir to sites of inflammation. The chain is Tumor necrosis factor ligand superfamily member 18 from Homo sapiens (Human).